A 541-amino-acid polypeptide reads, in one-letter code: MAKSIIYNDEARRALERGMDILAEAVAVTLGPKGRNVVLEKKFGSPQIINDGITIAKEIELEDHVENTGVSLIRQAASKTNDVAGDGTTTATVLAHAIVKEGLRNVAAGANPISLKRGIDKATDFLVARIKEHAQPVGDSKAIAQVGAISAGNDEEVGQMIANAMDKVGQEGVISLEEGKSMTTELEITEGMRFDKGYISPYFVTDAERMEAVLEDPRILITDKKINLVQDLVPILEQVARQGKPLLIIAEDIEKEALATLVVNRLRGVLNVAAVKAPGFGDRRKQMLEDIATLTGGQVISEDAGLKLESATVDSLGSARRINITKDNTTIVAEGNEAAVKSRCEQIRRQIEETDSSYDKEKLQERLAKLAGGVAVIKVGAATETEMKDRKLRLEDAINATKAAVEEGIVPGGGTTLAHLAPQLEDWATGNLKDEELTGALIVARALPAPLKRIAENAGQNGAVISERVKEKEFNVGYNAASLEYVDMLAAGIVDPAKVTRSALQNAASIAGMVLTTECIVVDKPEKEKAPAGAPGGDFDY.

ATP-binding positions include 29-32, 86-90, glycine 413, 479-481, and aspartate 495; these read TLGP, DGTTT, and NAA.

Belongs to the chaperonin (HSP60) family. In terms of assembly, forms a cylinder of 14 subunits composed of two heptameric rings stacked back-to-back. Interacts with the co-chaperonin GroES.

It is found in the cytoplasm. It carries out the reaction ATP + H2O + a folded polypeptide = ADP + phosphate + an unfolded polypeptide.. Functionally, together with its co-chaperonin GroES, plays an essential role in assisting protein folding. The GroEL-GroES system forms a nano-cage that allows encapsulation of the non-native substrate proteins and provides a physical environment optimized to promote and accelerate protein folding. The sequence is that of Chaperonin GroEL 1 from Synechocystis sp. (strain ATCC 27184 / PCC 6803 / Kazusa).